We begin with the raw amino-acid sequence, 709 residues long: Protein IMPAIRED IN BABA-INDUCED STERILITY 1 (709 aa).

Gly-2 carries N-myristoyl glycine lipidation. The tract at residues 53 to 80 (SGKKSSSKKSGSELGSDFGELSESGRAS) is disordered. Residues 131–418 (FEKLEKIGQG…ASTALVSQYF (288 aa)) enclose the Protein kinase domain. ATP is bound by residues 137-145 (IGQGTYSSV) and Lys-160. Residue Asp-255 is the Proton acceptor of the active site. Disordered stretches follow at residues 434 to 536 (SPSK…PFSG) and 566 to 609 (SRGH…QDRE). Residues 437–449 (KEIDAKHREDTTR) are compositionally biased toward basic and acidic residues. The span at 484-494 (HSQKFQKRNGH) shows a compositional bias: basic residues. Positions 495 to 505 (SVHNSIDSDST) are enriched in polar residues. Composition is skewed to basic and acidic residues over residues 509–523 (KMQK…EASH) and 586–609 (VDSK…QDRE).

This sequence belongs to the protein kinase superfamily. Ser/Thr protein kinase family.

Functionally, required for beta-aminobutyric acid (BABA)-induced resistance (BABA-IR) against bacteria (e.g. P.syringae) and oomycetes (e.g. H.parasitica) via priming for salicylate (SA)-dependent defense responses such as pathogenesis-related PR-1 gene expression and trailing necrosis. Involved in BABA-mediated sterility. Necessary for the inheritance of BABA-priming to next generation, especially for the primed to be primed phenotype which consists in an enhanced second BABA-priming in transgenerationally primed plants. In Arabidopsis thaliana (Mouse-ear cress), this protein is Protein IMPAIRED IN BABA-INDUCED STERILITY 1.